A 1265-amino-acid polypeptide reads, in one-letter code: 5-oxoprolinase (1265 aa).

This sequence belongs to the oxoprolinase family. As to quaternary structure, homodimer.

The protein localises to the cytoplasm. It localises to the cytosol. The enzyme catalyses 5-oxo-L-proline + ATP + 2 H2O = L-glutamate + ADP + phosphate + H(+). In terms of biological role, catalyzes the cleavage of 5-oxo-L-proline to form L-glutamate coupled to the hydrolysis of ATP to ADP and inorganic phosphate. In Dictyostelium discoideum (Social amoeba), this protein is 5-oxoprolinase (oplah).